A 496-amino-acid chain; its full sequence is Glutamate--tRNA ligase (496 aa).

Positions Pro-12 to Asn-22 match the 'HIGH' region motif. The 'KMSKS' region motif lies at Lys-259–Arg-263. Residue Lys-262 coordinates ATP.

Belongs to the class-I aminoacyl-tRNA synthetase family. Glutamate--tRNA ligase type 1 subfamily. Monomer.

Its subcellular location is the cytoplasm. The enzyme catalyses tRNA(Glu) + L-glutamate + ATP = L-glutamyl-tRNA(Glu) + AMP + diphosphate. Functionally, catalyzes the attachment of glutamate to tRNA(Glu) in a two-step reaction: glutamate is first activated by ATP to form Glu-AMP and then transferred to the acceptor end of tRNA(Glu). The chain is Glutamate--tRNA ligase from Lactiplantibacillus plantarum (strain ATCC BAA-793 / NCIMB 8826 / WCFS1) (Lactobacillus plantarum).